A 452-amino-acid chain; its full sequence is Bifunctional protein GlmU (452 aa).

The pyrophosphorylase stretch occupies residues 1 to 224; it reads MNIVILAAGM…EWETHGVNSK (224 aa). UDP-N-acetyl-alpha-D-glucosamine-binding positions include 6–9, lysine 20, glutamine 71, 76–77, 98–100, glycine 135, glutamate 149, asparagine 164, and asparagine 222; these read LAAG, GT, and YGD. Mg(2+) is bound at residue aspartate 100. Asparagine 222 is a binding site for Mg(2+). Positions 225 to 245 are linker; sequence VQLAELERIHQRNIAHALLEQ. Residues 246 to 452 form an N-acetyltransferase region; sequence GVTLADPARI…NWQRPVKIKK (207 aa). The UDP-N-acetyl-alpha-D-glucosamine site is built by arginine 328 and lysine 346. Histidine 358 (proton acceptor) is an active-site residue. Tyrosine 361 and asparagine 372 together coordinate UDP-N-acetyl-alpha-D-glucosamine. Acetyl-CoA contacts are provided by residues alanine 375, 381–382, serine 400, alanine 418, and arginine 435; that span reads NY.

This sequence in the N-terminal section; belongs to the N-acetylglucosamine-1-phosphate uridyltransferase family. The protein in the C-terminal section; belongs to the transferase hexapeptide repeat family. As to quaternary structure, homotrimer. Mg(2+) serves as cofactor.

The protein resides in the cytoplasm. It carries out the reaction alpha-D-glucosamine 1-phosphate + acetyl-CoA = N-acetyl-alpha-D-glucosamine 1-phosphate + CoA + H(+). The catalysed reaction is N-acetyl-alpha-D-glucosamine 1-phosphate + UTP + H(+) = UDP-N-acetyl-alpha-D-glucosamine + diphosphate. It participates in nucleotide-sugar biosynthesis; UDP-N-acetyl-alpha-D-glucosamine biosynthesis; N-acetyl-alpha-D-glucosamine 1-phosphate from alpha-D-glucosamine 6-phosphate (route II): step 2/2. The protein operates within nucleotide-sugar biosynthesis; UDP-N-acetyl-alpha-D-glucosamine biosynthesis; UDP-N-acetyl-alpha-D-glucosamine from N-acetyl-alpha-D-glucosamine 1-phosphate: step 1/1. Its pathway is bacterial outer membrane biogenesis; LPS lipid A biosynthesis. Functionally, catalyzes the last two sequential reactions in the de novo biosynthetic pathway for UDP-N-acetylglucosamine (UDP-GlcNAc). The C-terminal domain catalyzes the transfer of acetyl group from acetyl coenzyme A to glucosamine-1-phosphate (GlcN-1-P) to produce N-acetylglucosamine-1-phosphate (GlcNAc-1-P), which is converted into UDP-GlcNAc by the transfer of uridine 5-monophosphate (from uridine 5-triphosphate), a reaction catalyzed by the N-terminal domain. The polypeptide is Bifunctional protein GlmU (Janthinobacterium sp. (strain Marseille) (Minibacterium massiliensis)).